The chain runs to 158 residues: Salt stress-responsive protein YocM (158 aa).

One can recognise a sHSP domain in the interval 51–158 (GKGDASFPSM…GQAKTIVIDD (108 aa)).

Belongs to the small heat shock protein (HSP20) family. In terms of assembly, forms homodimers, homotetramers and higher oligomers.

The protein resides in the cytoplasm. Functionally, part of the cellular protein quality control system with a specific role in salt stress response. May facilitate protein homeostasis, together with chemical chaperones that accumulate during the salt stress response. Increased levels of YocM protects against both heat and salt stress. In vitro, displays an unusual aggregase chaperone activity. The polypeptide is Salt stress-responsive protein YocM (yocM) (Bacillus subtilis (strain 168)).